Consider the following 344-residue polypeptide: MVTERQQDILNLIIDIFTKTHEPVGSKALQESINSSSATIRNDMAELEKQGLLEKAHTSSGRMPSVAGFQYYVKHSLDFDRLAENEVYEIVKAFDQEFFKLEDILQEAANLLTDLSGCTVVALDVEPSRQRLTAFDIVVLGQHTALAVFTLDESRTVTSQFLIPRNFLQEDLLKLKSIIQERFLGHTVLDIHYKIRTEIPQIIQRYFTTTDNVIDLFEHIFKEMFNENIVMAGKVNLLNFANLAAYQFFDQPQKVALEIREGLREDQMQNVRVADGQESCLADLAVISSKFLIPYRGVGILAIIGPVNLDYQQLINQINVVNRVLTMKLTDFYRYLSSNHYEVH.

The protein belongs to the HrcA family.

Functionally, negative regulator of class I heat shock genes (grpE-dnaK-dnaJ and groELS operons). Prevents heat-shock induction of these operons. The sequence is that of Heat-inducible transcription repressor HrcA from Streptococcus pneumoniae (strain ATCC 700669 / Spain 23F-1).